Consider the following 183-residue polypeptide: Erythropoietin (183 aa).

An N-terminal signal peptide occupies residues 1-23; it reads MFHGSGLFALLLMVLEWTRPGLS. Disulfide bonds link Cys-30–Cys-178 and Cys-52–Cys-56. 2 N-linked (GlcNAc...) asparagine glycosylation sites follow: Asn-61 and Asn-104.

This sequence belongs to the EPO/TPO family. N-glycosylated. As to expression, expressed in heart and liver.

It is found in the secreted. In terms of biological role, erythropoietin is the principal hormone involved in the regulation of erythrocyte differentiation and the maintenance of a physiological level of circulating erythrocyte mass. This Danio rerio (Zebrafish) protein is Erythropoietin (epo).